The chain runs to 897 residues: 3'-5' exonuclease DinG (897 aa).

The Exonuclease domain occupies Val8–Leu161. In terms of domain architecture, Helicase ATP-binding spans Ser241–Arg496. Position 276–283 (Ala276–Ser283) interacts with ATP. Positions Asp448–His451 match the DEAH box motif. Residues Asn703–Gln893 enclose the Helicase C-terminal domain.

This sequence belongs to the helicase family. DinG subfamily. Type 2 sub-subfamily.

Its function is as follows. 3'-5' exonuclease. This is 3'-5' exonuclease DinG from Staphylococcus aureus (strain MSSA476).